Here is a 463-residue protein sequence, read N- to C-terminus: Dialkyldecalin synthase (463 aa).

Residues valine 13, 32-33 (ER), isoleucine 121, and aspartate 275 each bind FAD.

The protein belongs to the PheA/TfdB FAD monooxygenase family. Homodimer. FAD is required as a cofactor.

The enzyme catalyses 4-[(2E,7S,8E,10E,13R,14R,16E,18E)-14-ethyl-7,13-dihydroxy-2,16,18-trimethylicosa-2,8,10,16,18-pentaenoyl]-2-methylidene-5-oxo-2,5-dihydro-1H-pyrrol-3-olate = 4-[(1R,2R,4aS,5S,8aR)-2-[(2R,3R,5E,7E)-3-ethyl-2-hydroxy-5,7-dimethylnona-5,7-dien-1-yl]-5-hydroxy-1-methyl-1,2,4a,5,6,7,8,8a-octahydronaphthalene-1-carbonyl]-2-methylidene-5-oxo-2,5-dihydro-1H-pyrrol-3-olate. It functions in the pathway antibiotic biosynthesis. Its function is as follows. Involved in the biosynthesis of the spirotetramate antibiotics pyrroindomycins. Catalyzes the intramolecular cyclization forming the dialkyldecalin moiety in pyrroindomycins, via an endo-selective [4+2] cycloaddition reaction. The sequence is that of Dialkyldecalin synthase from Streptomyces rugosporus.